An 81-amino-acid polypeptide reads, in one-letter code: Photosystem I iron-sulfur center (81 aa).

4Fe-4S ferredoxin-type domains follow at residues 1–31 and 39–68; these read MAHS…MVPW and IASA…VRVY. Positions 11, 14, 17, 21, 48, 51, 54, and 58 each coordinate [4Fe-4S] cluster.

In terms of assembly, the eukaryotic PSI reaction center is composed of at least 11 subunits. It depends on [4Fe-4S] cluster as a cofactor.

Its subcellular location is the plastid. It localises to the chloroplast thylakoid membrane. The catalysed reaction is reduced [plastocyanin] + hnu + oxidized [2Fe-2S]-[ferredoxin] = oxidized [plastocyanin] + reduced [2Fe-2S]-[ferredoxin]. Functionally, apoprotein for the two 4Fe-4S centers FA and FB of photosystem I (PSI); essential for photochemical activity. FB is the terminal electron acceptor of PSI, donating electrons to ferredoxin. The C-terminus interacts with PsaA/B/D and helps assemble the protein into the PSI complex. Required for binding of PsaD and PsaE to PSI. PSI is a plastocyanin-ferredoxin oxidoreductase, converting photonic excitation into a charge separation, which transfers an electron from the donor P700 chlorophyll pair to the spectroscopically characterized acceptors A0, A1, FX, FA and FB in turn. This chain is Photosystem I iron-sulfur center, found in Welwitschia mirabilis (Tree tumbo).